A 674-amino-acid chain; its full sequence is MLRGDSAAKIQERYAELQKRKSHPTSCISTAFTNVAALCRKRYQMMHPELGLAHSCNEAFLPLMAFCGRHRDYNSPEESQRELLFHERLKSALDELTFRPCSEEQRASYQKLDALTELYRDPQFQQINNFMTDFKKWLDGGFSTAVEGDAKAIRLEPFQKNLLIHVIFFIAVTKIPVLANRVLQYLIHAFQIDFLSQTSIDIFKQKATVFLVPRRHGKTWFIIPIISFLLKHMIGISIGYVAHQKHVSQFVLKEVEFRCRHTFARDYVVENKDNVISIDHRGAKSTALFASCYNTNSIRGQNFHLLLVDEAHFIKKEAFNTILGFLAQNTTKIIFISSTNTTSDATCFLTRLNNAPFDMLNVVSYVCEEHLHSFTEKGDATACPCYRLHKPTFISLNSQVRKTANMFMPGAFMDEIIGGTNKISQNTVLITDQSREEFDILRYSTLNTNAYDYFGKTLYVYLDPAFTTNRKASGTGVAAVGAYRHQFLIYGLEHFFLRDLSESSEVAIAECAAHMIISVLSLHPYLDELRIAVEGNTNQAAAVRIACLIRQSVQSSTLIRVLFYHTPDQNHIEQPFYLMGRDKALAVEQFISRFNSGYIKASQELVSYTIKLSHDPIEYLLEQIQNLHRVTLAEGTTARYSAKRQNRISDDLIIAVIMATYLCDDIHAIRFRVS.

The Walker A motif motif lies at 212–219 (VPRRHGKT). Positions 305–310 (LLLVDE) match the Walker B motif motif. The For ATPase activity role is filled by glutamate 310. Residues aspartate 463, glutamate 534, and aspartate 651 each act as for nuclease activity in the active site.

This sequence belongs to the herpesviridae TRM3 protein family. Interacts with the terminase subunits TRM1 and TRM2. Interacts with portal protein.

It localises to the host nucleus. Component of the molecular motor that translocates viral genomic DNA in empty capsid during DNA packaging. Forms a tripartite terminase complex together with TRM1 and TRM2 in the host cytoplasm. Once the complex reaches the host nucleus, it interacts with the capsid portal vertex. This portal forms a ring in which genomic DNA is translocated into the capsid. TRM3 carries an RNase H-like nuclease activity that plays an important role for the cleavage of concatemeric viral DNA into unit length genomes. The polypeptide is Tripartite terminase subunit 3 (Homo sapiens (Human)).